The following is a 131-amino-acid chain: Ponticulin-like protein M (131 aa).

A signal peptide spans 1–19 (MKFLSTLILLLSVLALVRG). Serine 106 is lipidated: GPI-like-anchor amidated serine. Residues 107–131 (NSASSPLTTAVLFVVAFAAAIALLL) constitute a propeptide, removed in mature form.

The protein belongs to the ponticulin family. In terms of processing, the GPI-like-anchor contains a phosphoceramide group, rather than a phosphatidyl group.

The protein resides in the cell membrane. In terms of biological role, binds F-actin and nucleates actin assembly. The polypeptide is Ponticulin-like protein M (ponM) (Dictyostelium discoideum (Social amoeba)).